Reading from the N-terminus, the 407-residue chain is Na(+)-translocating NADH-quinone reductase subunit F (407 aa).

A helical transmembrane segment spans residues 3–23 (ITLGIAMFTVIVLALAVIILF). A 2Fe-2S ferredoxin-type domain is found at 32–126 (GDITIEINDD…SMKVELPEEV (95 aa)). [2Fe-2S] cluster-binding residues include C69, C75, C78, and C110. The FAD-binding FR-type domain maps to 129–269 (VKKWECTVIS…SGPFGEFFAK (141 aa)). The segment at 272–389 (DAEMVFVGGG…PIMNASVIKM (118 aa)) is catalytic.

Belongs to the NqrF family. In terms of assembly, composed of six subunits; NqrA, NqrB, NqrC, NqrD, NqrE and NqrF. [2Fe-2S] cluster serves as cofactor. Requires FAD as cofactor.

It is found in the cell inner membrane. It catalyses the reaction a ubiquinone + n Na(+)(in) + NADH + H(+) = a ubiquinol + n Na(+)(out) + NAD(+). Its function is as follows. NQR complex catalyzes the reduction of ubiquinone-1 to ubiquinol by two successive reactions, coupled with the transport of Na(+) ions from the cytoplasm to the periplasm. The first step is catalyzed by NqrF, which accepts electrons from NADH and reduces ubiquinone-1 to ubisemiquinone by a one-electron transfer pathway. The chain is Na(+)-translocating NADH-quinone reductase subunit F from Pasteurella multocida (strain Pm70).